A 562-amino-acid polypeptide reads, in one-letter code: Pyruvate kinase isozyme G, chloroplastic (562 aa).

Arg121 provides a ligand contact to substrate. Residues Asn123, Ser125, Asp156, and Thr157 each coordinate K(+). Asn123–His126 contributes to the ATP binding site. Glu308 contributes to the Mg(2+) binding site. Substrate contacts are provided by Gly331, Asp332, and Thr364. Asp332 is a binding site for Mg(2+).

This sequence belongs to the pyruvate kinase family. As to quaternary structure, homotetramer. Mg(2+) is required as a cofactor. It depends on K(+) as a cofactor. In terms of tissue distribution, highest levels in leaves. Also found in stems, roots and flowers.

It is found in the plastid. Its subcellular location is the chloroplast. The enzyme catalyses pyruvate + ATP = phosphoenolpyruvate + ADP + H(+). The protein operates within carbohydrate degradation; glycolysis; pyruvate from D-glyceraldehyde 3-phosphate: step 5/5. In Nicotiana tabacum (Common tobacco), this protein is Pyruvate kinase isozyme G, chloroplastic.